Consider the following 219-residue polypeptide: Phosphatidylserine decarboxylase proenzyme (219 aa).

Ser-182 (schiff-base intermediate with substrate; via pyruvic acid) is an active-site residue. Ser-182 bears the Pyruvic acid (Ser); by autocatalysis mark.

Belongs to the phosphatidylserine decarboxylase family. PSD-A subfamily. Heterodimer of a large membrane-associated beta subunit and a small pyruvoyl-containing alpha subunit. Requires pyruvate as cofactor. In terms of processing, is synthesized initially as an inactive proenzyme. Formation of the active enzyme involves a self-maturation process in which the active site pyruvoyl group is generated from an internal serine residue via an autocatalytic post-translational modification. Two non-identical subunits are generated from the proenzyme in this reaction, and the pyruvate is formed at the N-terminus of the alpha chain, which is derived from the carboxyl end of the proenzyme. The post-translation cleavage follows an unusual pathway, termed non-hydrolytic serinolysis, in which the side chain hydroxyl group of the serine supplies its oxygen atom to form the C-terminus of the beta chain, while the remainder of the serine residue undergoes an oxidative deamination to produce ammonia and the pyruvoyl prosthetic group on the alpha chain.

Its subcellular location is the cell membrane. The catalysed reaction is a 1,2-diacyl-sn-glycero-3-phospho-L-serine + H(+) = a 1,2-diacyl-sn-glycero-3-phosphoethanolamine + CO2. It participates in phospholipid metabolism; phosphatidylethanolamine biosynthesis; phosphatidylethanolamine from CDP-diacylglycerol: step 2/2. Its function is as follows. Catalyzes the formation of phosphatidylethanolamine (PtdEtn) from phosphatidylserine (PtdSer). The polypeptide is Phosphatidylserine decarboxylase proenzyme (Chlorobium phaeovibrioides (strain DSM 265 / 1930) (Prosthecochloris vibrioformis (strain DSM 265))).